A 137-amino-acid chain; its full sequence is Nucleoside diphosphate kinase (137 aa).

6 residues coordinate ATP: lysine 9, phenylalanine 57, arginine 85, threonine 91, arginine 102, and asparagine 112. Histidine 115 functions as the Pros-phosphohistidine intermediate in the catalytic mechanism.

The protein belongs to the NDK family. In terms of assembly, homotetramer. It depends on Mg(2+) as a cofactor.

The protein localises to the cytoplasm. It catalyses the reaction a 2'-deoxyribonucleoside 5'-diphosphate + ATP = a 2'-deoxyribonucleoside 5'-triphosphate + ADP. The catalysed reaction is a ribonucleoside 5'-diphosphate + ATP = a ribonucleoside 5'-triphosphate + ADP. Its function is as follows. Major role in the synthesis of nucleoside triphosphates other than ATP. The ATP gamma phosphate is transferred to the NDP beta phosphate via a ping-pong mechanism, using a phosphorylated active-site intermediate. This Campylobacter jejuni subsp. jejuni serotype O:6 (strain 81116 / NCTC 11828) protein is Nucleoside diphosphate kinase.